Here is a 92-residue protein sequence, read N- to C-terminus: Large ribosomal subunit protein eL43 (92 aa).

Residues cysteine 39, cysteine 42, cysteine 57, and cysteine 60 each coordinate Zn(2+). The C4-type zinc finger occupies 39–60; sequence CPVCGFPKLKRASTSIWVCGKC.

It belongs to the eukaryotic ribosomal protein eL43 family. Putative zinc-binding subfamily. In terms of assembly, part of the 50S ribosomal subunit. Zn(2+) is required as a cofactor.

Functionally, binds to the 23S rRNA. The protein is Large ribosomal subunit protein eL43 of Methanocaldococcus jannaschii (strain ATCC 43067 / DSM 2661 / JAL-1 / JCM 10045 / NBRC 100440) (Methanococcus jannaschii).